The following is a 225-amino-acid chain: UPF0758 protein Mhun_2739 (225 aa).

An MPN domain is found at Arg-102–Leu-225. Residues His-174, His-176, and Asp-187 each coordinate Zn(2+). Positions His-174 to Asp-187 match the JAMM motif motif.

It belongs to the UPF0758 family.

The protein is UPF0758 protein Mhun_2739 of Methanospirillum hungatei JF-1 (strain ATCC 27890 / DSM 864 / NBRC 100397 / JF-1).